Reading from the N-terminus, the 119-residue chain is MAKHVTTREKRRARIRRKISGTELRPRLTIYKSLKHMYAQLVDDVAGKTLVSVATTSKALKGELGDEDKTGAAKKVGEALAKAAKAKGIEQVVFDRNGFDYHGRVEAVAAAAREAGLKF.

Belongs to the universal ribosomal protein uL18 family. In terms of assembly, part of the 50S ribosomal subunit; part of the 5S rRNA/L5/L18/L25 subcomplex. Contacts the 5S and 23S rRNAs.

In terms of biological role, this is one of the proteins that bind and probably mediate the attachment of the 5S RNA into the large ribosomal subunit, where it forms part of the central protuberance. This chain is Large ribosomal subunit protein uL18, found in Anaeromyxobacter dehalogenans (strain 2CP-C).